Here is a 218-residue protein sequence, read N- to C-terminus: GTP cyclohydrolase 1 (218 aa).

The Zn(2+) site is built by C109, H112, and C180.

Belongs to the GTP cyclohydrolase I family. Toroid-shaped homodecamer, composed of two pentamers of five dimers.

The enzyme catalyses GTP + H2O = 7,8-dihydroneopterin 3'-triphosphate + formate + H(+). It functions in the pathway cofactor biosynthesis; 7,8-dihydroneopterin triphosphate biosynthesis; 7,8-dihydroneopterin triphosphate from GTP: step 1/1. This Haemophilus ducreyi (strain 35000HP / ATCC 700724) protein is GTP cyclohydrolase 1.